The following is a 597-amino-acid chain: DNA mismatch repair protein MutL (597 aa).

This sequence belongs to the DNA mismatch repair MutL/HexB family.

Its function is as follows. This protein is involved in the repair of mismatches in DNA. It is required for dam-dependent methyl-directed DNA mismatch repair. May act as a 'molecular matchmaker', a protein that promotes the formation of a stable complex between two or more DNA-binding proteins in an ATP-dependent manner without itself being part of a final effector complex. The chain is DNA mismatch repair protein MutL from Rhodopseudomonas palustris (strain BisB5).